The chain runs to 365 residues: Probable UDP-arabinopyranose mutase 1 (365 aa).

The DXD motif signature appears at 100-102 (DDD). N-linked (Glc...) arginine glycosylation is present at Arg148.

This sequence belongs to the RGP family. In terms of assembly, homopentamer or homohexamer. Mn(2+) is required as a cofactor. It depends on Mg(2+) as a cofactor. Reversibly glycosylated by UDP-glucose, UDP-xylose and UDP-galactose, but not UDP-mannose. Expressed in all tissues tested, including root, tuber, leaf, petiole, shoot, stolon and stem.

The protein resides in the secreted. It is found in the cell wall. Its subcellular location is the cell junction. It localises to the plasmodesma. The protein localises to the golgi apparatus. It catalyses the reaction UDP-beta-L-arabinofuranose = UDP-beta-L-arabinopyranose. Functionally, probable UDP-L-arabinose mutase involved in the biosynthesis of cell wall non-cellulosic polysaccharides. Was initially shown to possess an autoglycosylating activity which is dependent on the presence of UDP-glucose and manganese. The polypeptide is Probable UDP-arabinopyranose mutase 1 (Solanum tuberosum (Potato)).